A 183-amino-acid chain; its full sequence is Glutathione-regulated potassium-efflux system ancillary protein KefG (183 aa).

Belongs to the NAD(P)H dehydrogenase (quinone) family. KefG subfamily. Interacts with KefB.

The protein resides in the cell inner membrane. It catalyses the reaction a quinone + NADH + H(+) = a quinol + NAD(+). The enzyme catalyses a quinone + NADPH + H(+) = a quinol + NADP(+). Regulatory subunit of a potassium efflux system that confers protection against electrophiles. Required for full activity of KefB. The protein is Glutathione-regulated potassium-efflux system ancillary protein KefG of Salmonella enteritidis PT4 (strain P125109).